Here is an 819-residue protein sequence, read N- to C-terminus: Lon protease (819 aa).

Residues 1 to 14 (MNSTNNTDSQNLDP) show a composition bias toward polar residues. Residues 1-40 (MNSTNNTDSQNLDPNASEVEKLLDESAEAEEKVDDHTPPS) form a disordered region. A compositionally biased stretch (basic and acidic residues) spans 18–38 (EVEKLLDESAEAEEKVDDHTP). Positions 42 to 239 (LFILPLNKRP…KALVLLKKEL (198 aa)) constitute a Lon N-terminal domain. 392 to 399 (GPPGVGKT) contacts ATP. One can recognise a Lon proteolytic domain in the interval 634–818 (KTPVGVATGL…DDVFKIAFPG (185 aa)). Catalysis depends on residues Ser-724 and Lys-767.

The protein belongs to the peptidase S16 family. In terms of assembly, homohexamer. Organized in a ring with a central cavity.

The protein localises to the cytoplasm. It catalyses the reaction Hydrolysis of proteins in presence of ATP.. Its function is as follows. ATP-dependent serine protease that mediates the selective degradation of mutant and abnormal proteins as well as certain short-lived regulatory proteins. Required for cellular homeostasis and for survival from DNA damage and developmental changes induced by stress. Degrades polypeptides processively to yield small peptide fragments that are 5 to 10 amino acids long. Binds to DNA in a double-stranded, site-specific manner. In Chlamydia trachomatis serovar D (strain ATCC VR-885 / DSM 19411 / UW-3/Cx), this protein is Lon protease.